The sequence spans 123 residues: Small ribosomal subunit protein uS12 (123 aa).

A 3-methylthioaspartic acid modification is found at Asp-89. The disordered stretch occupies residues 102 to 123; it reads LDTQGVKDRKQGRSKYGAKRPK. Residues 113–123 are compositionally biased toward basic residues; it reads GRSKYGAKRPK.

It belongs to the universal ribosomal protein uS12 family. As to quaternary structure, part of the 30S ribosomal subunit. Contacts proteins S8 and S17. May interact with IF1 in the 30S initiation complex.

In terms of biological role, with S4 and S5 plays an important role in translational accuracy. Its function is as follows. Interacts with and stabilizes bases of the 16S rRNA that are involved in tRNA selection in the A site and with the mRNA backbone. Located at the interface of the 30S and 50S subunits, it traverses the body of the 30S subunit contacting proteins on the other side and probably holding the rRNA structure together. The combined cluster of proteins S8, S12 and S17 appears to hold together the shoulder and platform of the 30S subunit. This chain is Small ribosomal subunit protein uS12, found in Magnetococcus marinus (strain ATCC BAA-1437 / JCM 17883 / MC-1).